Here is a 432-residue protein sequence, read N- to C-terminus: Proteinase-activated receptor 1 (432 aa).

The first 21 residues, 1–21 (MGPRRLLLVAVGLSLCGPLLS), serve as a signal peptide directing secretion. Positions 22–45 (SRVPMRQPESERMYATPYATPNPR) are cleaved as a propeptide — removed for receptor activation. Residues 46 to 109 (SFFLRNPSED…SGYLTSPWLT (64 aa)) are Extracellular-facing. 2 N-linked (GlcNAc...) asparagine glycosylation sites follow: N69 and N82. Residues 110-135 (LFIPSVYTFVFIVSLPLNILAIAVFV) form a helical membrane-spanning segment. Residues 136-144 (FRMKVKKPA) lie on the Cytoplasmic side of the membrane. A helical membrane pass occupies residues 145–164 (VVYMLHLAMADVLFVSVLPF). At 165–183 (KISYYFSGTDWQFGSGMCR) the chain is on the extracellular side. C182 and C261 are disulfide-bonded. A helical membrane pass occupies residues 184 to 205 (FATAACYCNMYASIMLMTVISI). The Cytoplasmic portion of the chain corresponds to 206-225 (DRFLAVVYPIQSLSWRTLGR). The helical transmembrane segment at 226–246 (ANFTCVVIWVMAIMGVVPLLL) threads the bilayer. At 247–275 (KEQTTQVPGLNITTCHDVLNETLLHGFYS) the chain is on the extracellular side. N-linked (GlcNAc...) asparagine glycosylation is found at N257 and N266. A helical transmembrane segment spans residues 276–295 (YYFSAFSAIFFLVPLIISTV). Over 296 to 318 (CYTSIIRCLSSSAVANRSKKSRA) the chain is Cytoplasmic. A helical transmembrane segment spans residues 319–341 (LFLSAAVFCIFIVCFGPTNVLLI). The Extracellular portion of the chain corresponds to 342 to 357 (VHYLLLSDSPGTETAY). A helical membrane pass occupies residues 358–381 (FAYLLCVCVTSVASCIDPLIYYYA). Over 382-432 (SSECQKHLYSILCCRESSDSNSCNSTGQLMPSKMDTCSSHLNNSIYKKLLA) the chain is Cytoplasmic. Residue S425 is modified to Phosphoserine.

This sequence belongs to the G-protein coupled receptor 1 family. In terms of processing, proteolytic cleavage by thrombin generates a new N-terminus that functions as a tethered ligand. Also proteolytically cleaved by cathepsin CTSG. Phosphorylated in the C-terminal tail; probably mediating desensitization prior to the uncoupling and internalization of the receptor. Expressed in primary cultured oligodendrocytes.

The protein resides in the cell membrane. Its function is as follows. High affinity receptor that binds the activated thrombin, leading to calcium release from intracellular stores. The thrombin-activated receptor signaling pathway is mediated through PTX-insensitive G proteins, activation of phospholipase C resulting in the production of 1D-myo-inositol 1,4,5-trisphosphate (InsP3) which binds to InsP3 receptors causing calcium release from the stores. In astrocytes, the calcium released into the cytosol allows the Ca(2+)-dependent release of L-glutamate into the synaptic cleft through BEST1, that targets the neuronal postsynaptic GRIN2A/NMDAR receptor resulting in the synaptic plasticity regulation. May play a role in platelets activation and in vascular development. Mediates up-regulation of pro-inflammatory cytokines, such as MCP-1/CCL2 and IL6, triggered by coagulation factor Xa (F10) in cardiac fibroblasts and umbilical vein endothelial cells. In Rattus norvegicus (Rat), this protein is Proteinase-activated receptor 1.